The following is a 383-amino-acid chain: S-adenosylmethionine synthase (383 aa).

H22 is a binding site for ATP. D24 contributes to the Mg(2+) binding site. E50 provides a ligand contact to K(+). L-methionine-binding residues include E63 and Q99. Positions 99–109 are flexible loop; sequence QSSEINQAVQS. ATP-binding positions include 160–162, D235, 241–242, S258, and K262; these read DMK and RK. D235 contributes to the L-methionine binding site. K266 is a binding site for L-methionine.

The protein belongs to the AdoMet synthase family. In terms of assembly, homotetramer; dimer of dimers. The cofactor is Mg(2+). It depends on K(+) as a cofactor.

Its subcellular location is the cytoplasm. It carries out the reaction L-methionine + ATP + H2O = S-adenosyl-L-methionine + phosphate + diphosphate. The protein operates within amino-acid biosynthesis; S-adenosyl-L-methionine biosynthesis; S-adenosyl-L-methionine from L-methionine: step 1/1. In terms of biological role, catalyzes the formation of S-adenosylmethionine (AdoMet) from methionine and ATP. The overall synthetic reaction is composed of two sequential steps, AdoMet formation and the subsequent tripolyphosphate hydrolysis which occurs prior to release of AdoMet from the enzyme. The polypeptide is S-adenosylmethionine synthase (Mycoplasma pneumoniae (strain ATCC 29342 / M129 / Subtype 1) (Mycoplasmoides pneumoniae)).